A 106-amino-acid polypeptide reads, in one-letter code: ATP-dependent Clp protease adapter protein ClpS (106 aa).

It belongs to the ClpS family. Binds to the N-terminal domain of the chaperone ClpA.

Its function is as follows. Involved in the modulation of the specificity of the ClpAP-mediated ATP-dependent protein degradation. The sequence is that of ATP-dependent Clp protease adapter protein ClpS from Sodalis glossinidius (strain morsitans).